We begin with the raw amino-acid sequence, 317 residues long: CXXC-type zinc finger protein 5 (317 aa).

Positions 1 to 10 (MSSLGGGSQD) are enriched in gly residues. Positions 1–92 (MSSLGGGSQD…SFGSSGGGGS (92 aa)) are disordered. Composition is skewed to low complexity over residues 11 to 27 (AGGS…SGSG) and 36 to 51 (STAV…VADD). The CXXC-type zinc-finger motif lies at 251 to 292 (GKKKRKRCGMCAPCRRRINCEQCSSCRNRKTGHQICKFRKCE). Residues 252-257 (KKKRKR) carry the Nuclear localization signal motif. Zn(2+) contacts are provided by Cys-258, Cys-261, Cys-264, Cys-270, Cys-273, Cys-276, Cys-286, and Cys-291.

In terms of assembly, interacts with DVL1. Interacts with RBPJ.

Its subcellular location is the nucleus. It localises to the cytoplasm. May indirectly participate in activation of the NF-kappa-B and MAPK pathways. Acts as a mediator of BMP4-mediated modulation of canonical Wnt signaling activity in neural stem cells. Required for DNA damage-induced ATM phosphorylation, p53 activation and cell cycle arrest. Involved in myelopoiesis. Binds to the oxygen responsive element of COX4I2 and represses its transcription under hypoxia conditions (4% oxygen), as well as normoxia conditions (20% oxygen). May repress COX4I2 transactivation induced by CHCHD2 and RBPJ. Binds preferentially to DNA containing cytidine-phosphate-guanosine (CpG) dinucleotides over CpH (H=A, T, and C), hemimethylated-CpG and hemimethylated-hydroxymethyl-CpG. The protein is CXXC-type zinc finger protein 5 (Cxxc5) of Mus musculus (Mouse).